A 119-amino-acid chain; its full sequence is Membrane-anchored ubiquitin-fold protein 3 (119 aa).

A Ubiquitin-like domain is found at 8–76 (IEVKFRLFDG…NNRTLAESRV (69 aa)). The residue at position 116 (cysteine 116) is a Cysteine methyl ester. Cysteine 116 carries S-geranylgeranyl cysteine lipidation. Positions 117–119 (TIL) are cleaved as a propeptide — removed in mature form.

The protein localises to the cell membrane. In terms of biological role, may serve as docking site to facilitate the association of other proteins to the plasma membrane. The protein is Membrane-anchored ubiquitin-fold protein 3 (MUB3) of Oryza sativa subsp. japonica (Rice).